Reading from the N-terminus, the 398-residue chain is Serpin-ZX (398 aa).

An RCL region spans residues 342–366 (GTEAAARTARVVTLRSLPVEPVKVD).

Belongs to the serpin family. In terms of tissue distribution, expressed in roots, coleoptiles, shoots, leaves, embryo and endosperm.

Functionally, inhibits chymotrypsin, cathepsin G and trypsin in vitro. This is Serpin-ZX (PAZX) from Hordeum vulgare (Barley).